The chain runs to 232 residues: uncharacterized protein (232 aa).

The segment at 1 to 71 (MSNPTIEGDE…KENERIKNDD (71 aa)) is disordered. Residues 25 to 38 (DDLDDLDDILDDLD) are compositionally biased toward acidic residues. The segment covering 44-71 (KNEEKKNIDEHKQTGNTSKENERIKNDD) has biased composition (basic and acidic residues).

This is an uncharacterized protein from Schizosaccharomyces pombe (strain 972 / ATCC 24843) (Fission yeast).